The following is a 385-amino-acid chain: Methionyl-tRNA formyltransferase, mitochondrial (385 aa).

Belongs to the Fmt family.

The protein localises to the mitochondrion. The catalysed reaction is L-methionyl-tRNA(fMet) + (6R)-10-formyltetrahydrofolate = N-formyl-L-methionyl-tRNA(fMet) + (6S)-5,6,7,8-tetrahydrofolate + H(+). Methionyl-tRNA formyltransferase that formylates methionyl-tRNA in mitochondria and is crucial for translation initiation. This chain is Methionyl-tRNA formyltransferase, mitochondrial (Mtfmt), found in Rattus norvegicus (Rat).